Reading from the N-terminus, the 420-residue chain is Serine hydroxymethyltransferase (420 aa).

(6S)-5,6,7,8-tetrahydrofolate contacts are provided by residues Leu-121 and 125-127 (GHL). An N6-(pyridoxal phosphate)lysine modification is found at Lys-229.

The protein belongs to the SHMT family. In terms of assembly, homodimer. It depends on pyridoxal 5'-phosphate as a cofactor.

It is found in the cytoplasm. The enzyme catalyses (6R)-5,10-methylene-5,6,7,8-tetrahydrofolate + glycine + H2O = (6S)-5,6,7,8-tetrahydrofolate + L-serine. It participates in one-carbon metabolism; tetrahydrofolate interconversion. It functions in the pathway amino-acid biosynthesis; glycine biosynthesis; glycine from L-serine: step 1/1. Its function is as follows. Catalyzes the reversible interconversion of serine and glycine with tetrahydrofolate (THF) serving as the one-carbon carrier. This reaction serves as the major source of one-carbon groups required for the biosynthesis of purines, thymidylate, methionine, and other important biomolecules. Also exhibits THF-independent aldolase activity toward beta-hydroxyamino acids, producing glycine and aldehydes, via a retro-aldol mechanism. The sequence is that of Serine hydroxymethyltransferase from Pasteurella multocida (strain Pm70).